The following is a 118-amino-acid chain: Small ribosomal subunit protein uS13 (118 aa).

A disordered region spans residues 92-118; sequence RRGLPVRGQRTKTNARTRKGPRKPIKK.

It belongs to the universal ribosomal protein uS13 family. Part of the 30S ribosomal subunit. Forms a loose heterodimer with protein S19. Forms two bridges to the 50S subunit in the 70S ribosome.

Functionally, located at the top of the head of the 30S subunit, it contacts several helices of the 16S rRNA. In the 70S ribosome it contacts the 23S rRNA (bridge B1a) and protein L5 of the 50S subunit (bridge B1b), connecting the 2 subunits; these bridges are implicated in subunit movement. Contacts the tRNAs in the A and P-sites. In Pectobacterium carotovorum subsp. carotovorum (strain PC1), this protein is Small ribosomal subunit protein uS13.